We begin with the raw amino-acid sequence, 585 residues long: Pre-mRNA-splicing factor sap145 (585 aa).

Positions 1-74 form a coiled coil; it reads MAEIQTAQNP…NNDNLYNDKK (74 aa). A disordered region spans residues 1–84; the sequence is MAEIQTAQNP…SNGNFYDTNK (84 aa). The segment covering 12–22 has biased composition (basic and acidic residues); it reads KELEKILERNN. Basic residues predominate over residues 23–41; that stretch reads KQKNKKSRNQVRREKKKLL. Positions 51–62 are enriched in basic and acidic residues; it reads LAEKNSDDKDQL. The residue at position 145 (serine 145) is a Phosphoserine. Residues 400–460 are disordered; that stretch reads IHAGTGSPVS…SASEPRSQRE (61 aa). The segment covering 416–439 has biased composition (acidic residues); it reads LEEFEEEESSEEEESEDVEYPTEE.

In terms of assembly, belongs to the 40S cdc5-associated complex (or cwf complex), a spliceosome sub-complex reminiscent of a late-stage spliceosome composed of the U2, U5 and U6 snRNAs and at least brr2, cdc5, cwf2/prp3, cwf3/syf1, cwf4/syf3, cwf5/ecm2, spp42/cwf6, cwf7/spf27, cwf8, cwf9, cwf10, cwf11, cwf12, prp45/cwf13, cwf14, cwf15, cwf16, cwf17, cwf18, cwf19, cwf20, cwf21, cwf22, cwf23, cwf24, cwf25, cwf26, cyp7/cwf27, cwf28, cwf29/ist3, lea1, msl1, prp5/cwf1, prp10/sap155, prp12/sap130, prp17, prp22, sap61, sap62, sap114, sap145, slu7, smb1, smd1, smd3, smf1, smg1 and syf2. Sap145 is part of the SF3b subcomplex of the Prp19-associated nineteen complex (NTC), composed of ini1, prp10, prp12/sap130, sap10/sap155, sap14, sap49 and sap145. Part of the U2 snRNP.

It localises to the nucleus. Its subcellular location is the cytoplasm. Its function is as follows. Involved in pre-mRNA splicing. May be involved in endoplasmic reticulum-associated protein degradation (ERAD) and required for growth at low and high temperatures. The chain is Pre-mRNA-splicing factor sap145 (sap145) from Schizosaccharomyces pombe (strain 972 / ATCC 24843) (Fission yeast).